The following is a 196-amino-acid chain: Dephospho-CoA kinase (196 aa).

One can recognise a DPCK domain in the interval A6–L196. G14–T19 contributes to the ATP binding site.

The protein belongs to the CoaE family.

It localises to the cytoplasm. The enzyme catalyses 3'-dephospho-CoA + ATP = ADP + CoA + H(+). It participates in cofactor biosynthesis; coenzyme A biosynthesis; CoA from (R)-pantothenate: step 5/5. In terms of biological role, catalyzes the phosphorylation of the 3'-hydroxyl group of dephosphocoenzyme A to form coenzyme A. This chain is Dephospho-CoA kinase, found in Helicobacter pylori (strain J99 / ATCC 700824) (Campylobacter pylori J99).